A 425-amino-acid polypeptide reads, in one-letter code: MDLQLPRGTRDILPEEVSKWHFLETEFKKVCENYQYEEIRTPVFEHTELFERGVGDSTDIVSKEMYTFQDKGGRSLTLRPEGTASVVRAFVEHKLYGEVSQPIKMYYNEPMFRYERPQGGRQRQFTQMGIEALGSDDPSIDVEVISLAMEFFRKIGLINIKLVINSLGDKESRLKHREALVAHFEPHIDEFCAECQVRLHKNPLRILDCKKDHDNPLIQSAPSILDFLNEESVAYFENVKKYLNALEIPFEIDSTMVRGLDYYNHTTFEIMSVEEGFGAKTTLCGGGRYHGLVREFGGPDTPGMGFGIGVERILLALEKADIKIPAKKPLEVYVITAQPEAELKAVTLVNKLRQNGISAEKDYLKRKFKAQLKDANRKNAVYTIILGEEELQTGNYQLKNMETGEQEAVSETTILEKLINTKGEN.

The protein belongs to the class-II aminoacyl-tRNA synthetase family. Homodimer.

It is found in the cytoplasm. The catalysed reaction is tRNA(His) + L-histidine + ATP = L-histidyl-tRNA(His) + AMP + diphosphate + H(+). This Listeria monocytogenes serotype 4b (strain F2365) protein is Histidine--tRNA ligase.